The sequence spans 111 residues: U-scoloptoxin(16)-Sm2a (111 aa).

Positions 1–28 are cleaved as a signal peptide; the sequence is MCAKPNHLFVTVTFIFGFAVCIVQISAW.

It belongs to the scoloptoxin-16 family. Contains 4 disulfide bonds. As to expression, expressed by the venom gland.

The protein resides in the secreted. The chain is U-scoloptoxin(16)-Sm2a from Scolopendra morsitans (Tanzanian blue ringleg centipede).